The sequence spans 440 residues: Acyltransferase Pun1 (440 aa).

Active-site proton acceptor residues include His-169 and Asp-384.

This sequence belongs to the plant acyltransferase family.

It carries out the reaction vanillylamine + (6E)-8-methylnon-6-enoyl-CoA = capsaicin + CoA + H(+). The catalysed reaction is (6E)-8-methylnon-6-enoyl-CoA + 4-hydroxy-3-methoxy-benzenemethanol = capsiate + CoA. Involved in the biosynthesis of capsaicinoids and capsinoids natural products, pungent alkaloids synthesized from phenylpropanoid intermediates in the placental tissue of chili pepper fruit acting as repellant on herbivorous mammals and conferring spiciness to hot peppers. Catalyzes the biosynthesis of capsaicin, a pungent component, and of capsiate, a non-pungent component, from vanillylamine and vanillyl alcohol, respectively. Can transfer an acyl from 8-methylnon-6-enoyl-CoA to vanillylamine forming capsaicin and CoA. The protein is Acyltransferase Pun1 of Capsicum frutescens (Cayenne pepper).